Consider the following 507-residue polypeptide: Cytochrome P450 monooxygenase helB3 (507 aa).

Positions 1 to 25 (MAVATLISILFAVLALRLCYLLIHA) are cleaved as a signal peptide. Residues asparagine 111, asparagine 206, and asparagine 339 are each glycosylated (N-linked (GlcNAc...) asparagine). Residue cysteine 435 coordinates heme.

It belongs to the cytochrome P450 family. Heme is required as a cofactor.

It functions in the pathway mycotoxin biosynthesis. Its function is as follows. Cytochrome P450 monooxygenase; part of the gene cluster that mediates the biosynthesis of helvolic acid, an antibacterial nortriterpenoid. Protostadienol synthase helA cyclizes (3S)-oxidosqualene to (17Z)-protosta-17(20),24-dien-3-beta-ol (protostadienol). The synthesis of protostadienol is followed by several steps of monooxygenation, dehydrogenation, and acyl transfer to yield the final helvolic acid. Following the cyclization to the tetracyclic protostadienol by helA, cytochrome P450 monooxygenases helB1-mediated and helB2-mediated oxidation at C-4 and C-16, acyltransferase helD2-dependent acetylation of 16-OH, oxidation of C-21 by cytochrome P450 monooxygenase helB4, and short chain dehydrogenase helC-dependent oxidative decarboxylation yield the fusidane skeleton. This intermediate is further modified in three additional steps mediated by the cytochrome P450 monooxygenase helB3, the acyltransferase helD1, and the 3-ketosteroid 1-dehydrogenase helE to give helvolic acid. Compared with the late stages in the biosynthesis of helvolic acid, enzymes involved in the early stage modifications act in a relatively strict order. The hydroxylation of C-16 by helB1 and subsequent acetylation by helD2 should occur before the helB3-mediated oxidation of C-21. C-4 demethylation in fusidane-type antibiotics proceeds in an unusual manner though it is also achieved by oxidative decarboxylation. The methyl group at C-4 beta position is oxidized by helB1 and subsequently removed by the short chain dehydrogenase helC. This is Cytochrome P450 monooxygenase helB3 from Aspergillus fumigatus (strain ATCC MYA-4609 / CBS 101355 / FGSC A1100 / Af293) (Neosartorya fumigata).